A 201-amino-acid polypeptide reads, in one-letter code: Receptor expression-enhancing protein 1 (201 aa).

The next 2 helical transmembrane spans lie at 1–21 (MVSW…YPAY) and 35–55 (YVKW…ETFT). Residue serine 152 is modified to Phosphoserine. The segment at 158–201 (TIRGDGAPAPSGPPPPGTGRSSGKHSQPKMSRSASESAGSSGTA) is disordered. Residues 188-201 (SRSASESAGSSGTA) are compositionally biased toward low complexity.

This sequence belongs to the DP1 family. In terms of assembly, interacts with OLFR992. Interacts with SPAST and ATL1. Interacts (via C-terminus) with microtubules. Interacts with ZFYVE27. In terms of tissue distribution, detected in olfactory sensory neurons of the olfactory epithelium, and in total brain.

It is found in the membrane. The protein localises to the mitochondrion membrane. It localises to the endoplasmic reticulum. Functionally, required for endoplasmic reticulum (ER) network formation, shaping and remodeling; it links ER tubules to the cytoskeleton. May also enhance the cell surface expression of odorant receptors. This chain is Receptor expression-enhancing protein 1 (Reep1), found in Mus musculus (Mouse).